A 109-amino-acid polypeptide reads, in one-letter code: uncharacterized protein (109 aa).

A coiled-coil region spans residues 27 to 89 (KEEAHQFRDK…LKRIDELIAV (63 aa)).

This is an uncharacterized protein from Streptococcus pneumoniae.